Consider the following 243-residue polypeptide: Small ribosomal subunit protein uS2 (243 aa).

The protein belongs to the universal ribosomal protein uS2 family.

The polypeptide is Small ribosomal subunit protein uS2 (Chromobacterium violaceum (strain ATCC 12472 / DSM 30191 / JCM 1249 / CCUG 213 / NBRC 12614 / NCIMB 9131 / NCTC 9757 / MK)).